The chain runs to 331 residues: Glyoxylate reductase (331 aa).

NADP(+)-binding positions include 158-161, 180-182, and 239-241; these read FGRI, SRT, and TSR. Catalysis depends on residues Arg241 and Glu270. His288 acts as the Proton donor in catalysis. 288–290 contributes to the NADP(+) binding site; the sequence is HIG.

It belongs to the D-isomer specific 2-hydroxyacid dehydrogenase family. GyaR subfamily. Homodimer.

The protein localises to the cytoplasm. It carries out the reaction glycolate + NAD(+) = glyoxylate + NADH + H(+). This is Glyoxylate reductase from Thermococcus litoralis (strain ATCC 51850 / DSM 5473 / JCM 8560 / NS-C).